The sequence spans 526 residues: Probable Xaa-Pro aminopeptidase GLRG_02280 (526 aa).

Mn(2+)-binding residues include Asp-285, Asp-296, Glu-454, and Glu-495.

It belongs to the peptidase M24B family. Mn(2+) is required as a cofactor.

It carries out the reaction Release of any N-terminal amino acid, including proline, that is linked to proline, even from a dipeptide or tripeptide.. Catalyzes the removal of a penultimate prolyl residue from the N-termini of peptides. In Colletotrichum graminicola (strain M1.001 / M2 / FGSC 10212) (Maize anthracnose fungus), this protein is Probable Xaa-Pro aminopeptidase GLRG_02280.